Here is a 399-residue protein sequence, read N- to C-terminus: Succinyl-diaminopimelate desuccinylase (399 aa).

A Zn(2+)-binding site is contributed by histidine 80. Aspartate 82 is a catalytic residue. Position 113 (aspartate 113) interacts with Zn(2+). Glutamate 147 functions as the Proton acceptor in the catalytic mechanism. Glutamate 148, glutamate 176, and histidine 366 together coordinate Zn(2+).

This sequence belongs to the peptidase M20A family. DapE subfamily. In terms of assembly, homodimer. Requires Zn(2+) as cofactor. It depends on Co(2+) as a cofactor.

It catalyses the reaction N-succinyl-(2S,6S)-2,6-diaminopimelate + H2O = (2S,6S)-2,6-diaminopimelate + succinate. It participates in amino-acid biosynthesis; L-lysine biosynthesis via DAP pathway; LL-2,6-diaminopimelate from (S)-tetrahydrodipicolinate (succinylase route): step 3/3. In terms of biological role, catalyzes the hydrolysis of N-succinyl-L,L-diaminopimelic acid (SDAP), forming succinate and LL-2,6-diaminopimelate (DAP), an intermediate involved in the bacterial biosynthesis of lysine and meso-diaminopimelic acid, an essential component of bacterial cell walls. The chain is Succinyl-diaminopimelate desuccinylase from Colwellia psychrerythraea (strain 34H / ATCC BAA-681) (Vibrio psychroerythus).